The chain runs to 335 residues: MTWFTPDVIDAIIAVVKAIVVLLAVVVCGALLSFIERRLLGWWQDRYGPNRVGPFGMFQIAADMLKMFFKEDWTPPFADKVIFTLAPVVAMSALLIAFAVIPITPTWGVADLNIGLLFFFAMAGLSVYAVLFAGWSSNNKFALLGSLRASAQTVSYEVFMGLALMGIVVQVGSFNMRDIVEYQAQNLWFIIPQFFGFCTFFIAGVAVTHRHPFDQPEAEQELADGYHIEYAGMKWGMFFVGEYIGIILISALLVTLFFGGWHGPFDILPSLAFFWFALKTAFFIMLFILLRASIPRPRYDQVMDFSWKFCLPLTLINLLVTAAIVLLNTPAGSVQ.

A run of 8 helical transmembrane segments spans residues 12-32, 81-101, 114-134, 154-174, 187-207, 238-258, 270-290, and 307-327; these read IIAV…GALL, VIFT…FAVI, IGLL…LFAG, VSYE…VGSF, LWFI…GVAV, FFVG…TLFF, SLAF…FILL, and WKFC…IVLL.

The protein belongs to the complex I subunit 1 family. In terms of assembly, NDH-1 is composed of 13 different subunits. Subunits NuoA, H, J, K, L, M, N constitute the membrane sector of the complex.

It is found in the cell inner membrane. The catalysed reaction is a quinone + NADH + 5 H(+)(in) = a quinol + NAD(+) + 4 H(+)(out). Its function is as follows. NDH-1 shuttles electrons from NADH, via FMN and iron-sulfur (Fe-S) centers, to quinones in the respiratory chain. The immediate electron acceptor for the enzyme in this species is believed to be ubiquinone. Couples the redox reaction to proton translocation (for every two electrons transferred, four hydrogen ions are translocated across the cytoplasmic membrane), and thus conserves the redox energy in a proton gradient. This subunit may bind ubiquinone. The chain is NADH-quinone oxidoreductase subunit H from Pseudomonas syringae pv. syringae (strain B728a).